The following is a 308-amino-acid chain: Ornithine carbamoyltransferase (308 aa).

Carbamoyl phosphate contacts are provided by residues 57–60 (STRT), Gln84, Arg108, and 135–138 (HPCQ). L-ornithine contacts are provided by residues Asn166, Asp224, and 228-229 (SM). Carbamoyl phosphate contacts are provided by residues 264 to 265 (CL) and Arg292.

The protein belongs to the aspartate/ornithine carbamoyltransferase superfamily. OTCase family.

Its subcellular location is the cytoplasm. The catalysed reaction is carbamoyl phosphate + L-ornithine = L-citrulline + phosphate + H(+). It participates in amino-acid biosynthesis; L-arginine biosynthesis; L-arginine from L-ornithine and carbamoyl phosphate: step 1/3. Reversibly catalyzes the transfer of the carbamoyl group from carbamoyl phosphate (CP) to the N(epsilon) atom of ornithine (ORN) to produce L-citrulline. This is Ornithine carbamoyltransferase from Ralstonia nicotianae (strain ATCC BAA-1114 / GMI1000) (Ralstonia solanacearum).